Here is a 397-residue protein sequence, read N- to C-terminus: Ubiquitin-like modifier-activating enzyme 5 (397 aa).

Residues Gly76, Asp97, Lys120, Asn143, and Asn177 each coordinate ATP. Cys219 and Cys222 together coordinate Zn(2+). Cys243 acts as the Glycyl thioester intermediate in catalysis. Zn(2+) is bound by residues Cys296 and Cys301. Positions Pro343–Asp384 are disordered.

Belongs to the ubiquitin-activating E1 family. UBA5 subfamily.

In terms of biological role, E1-like enzyme which activates UFM1. The chain is Ubiquitin-like modifier-activating enzyme 5 from Drosophila pseudoobscura pseudoobscura (Fruit fly).